Consider the following 151-residue polypeptide: Small ribosomal subunit protein uS11 (151 aa).

Residues 130-151 (EDVTPIPSDSTRRKGGRRGRRL) are disordered. The segment covering 142-151 (RKGGRRGRRL) has biased composition (basic residues).

This sequence belongs to the universal ribosomal protein uS11 family.

This is Small ribosomal subunit protein uS11 from Aedes aegypti (Yellowfever mosquito).